Here is a 374-residue protein sequence, read N- to C-terminus: 4-hydroxy-3-methylbut-2-en-1-yl diphosphate synthase (flavodoxin) (374 aa).

4 residues coordinate [4Fe-4S] cluster: cysteine 270, cysteine 273, cysteine 305, and glutamate 312.

Belongs to the IspG family. [4Fe-4S] cluster is required as a cofactor.

The catalysed reaction is (2E)-4-hydroxy-3-methylbut-2-enyl diphosphate + oxidized [flavodoxin] + H2O + 2 H(+) = 2-C-methyl-D-erythritol 2,4-cyclic diphosphate + reduced [flavodoxin]. Its pathway is isoprenoid biosynthesis; isopentenyl diphosphate biosynthesis via DXP pathway; isopentenyl diphosphate from 1-deoxy-D-xylulose 5-phosphate: step 5/6. Functionally, converts 2C-methyl-D-erythritol 2,4-cyclodiphosphate (ME-2,4cPP) into 1-hydroxy-2-methyl-2-(E)-butenyl 4-diphosphate. In Yersinia enterocolitica serotype O:8 / biotype 1B (strain NCTC 13174 / 8081), this protein is 4-hydroxy-3-methylbut-2-en-1-yl diphosphate synthase (flavodoxin).